Reading from the N-terminus, the 283-residue chain is Bifunctional protein FolD (283 aa).

166 to 168 (GAS) provides a ligand contact to NADP(+).

The protein belongs to the tetrahydrofolate dehydrogenase/cyclohydrolase family. As to quaternary structure, homodimer.

It carries out the reaction (6R)-5,10-methylene-5,6,7,8-tetrahydrofolate + NADP(+) = (6R)-5,10-methenyltetrahydrofolate + NADPH. The catalysed reaction is (6R)-5,10-methenyltetrahydrofolate + H2O = (6R)-10-formyltetrahydrofolate + H(+). Its pathway is one-carbon metabolism; tetrahydrofolate interconversion. In terms of biological role, catalyzes the oxidation of 5,10-methylenetetrahydrofolate to 5,10-methenyltetrahydrofolate and then the hydrolysis of 5,10-methenyltetrahydrofolate to 10-formyltetrahydrofolate. This chain is Bifunctional protein FolD, found in Coxiella burnetii (strain CbuG_Q212) (Coxiella burnetii (strain Q212)).